The primary structure comprises 34 residues: Photosystem II reaction center protein M (34 aa).

The helical transmembrane segment at 5–25 (ILAFIATVLFILVPTAFLLII) threads the bilayer.

Belongs to the PsbM family. As to quaternary structure, PSII is composed of 1 copy each of membrane proteins PsbA, PsbB, PsbC, PsbD, PsbE, PsbF, PsbH, PsbI, PsbJ, PsbK, PsbL, PsbM, PsbT, PsbX, PsbY, PsbZ, Psb30/Ycf12, at least 3 peripheral proteins of the oxygen-evolving complex and a large number of cofactors. It forms dimeric complexes.

The protein resides in the plastid. Its subcellular location is the chloroplast thylakoid membrane. Functionally, one of the components of the core complex of photosystem II (PSII). PSII is a light-driven water:plastoquinone oxidoreductase that uses light energy to abstract electrons from H(2)O, generating O(2) and a proton gradient subsequently used for ATP formation. It consists of a core antenna complex that captures photons, and an electron transfer chain that converts photonic excitation into a charge separation. This subunit is found at the monomer-monomer interface. The sequence is that of Photosystem II reaction center protein M from Piper cenocladum (Ant piper).